A 283-amino-acid chain; its full sequence is Lectin-like protein At1g53080 (283 aa).

Residues 1–23 form the signal peptide; that stretch reads MQIHKLCIFVLFISLLSSKTISA. A legume-lectin like region spans residues 24 to 277; that stretch reads VKFNFNRFDG…RHDIWSWSFE (254 aa). N-linked (GlcNAc...) asparagine glycans are attached at residues Asn-84 and Asn-138. Ser-247 carries the post-translational modification Phosphoserine.

It belongs to the leguminous lectin family.

It localises to the secreted. Its subcellular location is the extracellular space. The protein resides in the apoplast. The polypeptide is Lectin-like protein At1g53080 (Arabidopsis thaliana (Mouse-ear cress)).